The following is a 283-amino-acid chain: Glutamyl-Q tRNA(Asp) synthetase (283 aa).

Residues 5–9 (RFAPT) and Glu41 contribute to the L-glutamate site. The 'HIGH' region motif lies at 8–18 (PTPSGPLHLGS). Positions 97, 99, 111, and 115 each coordinate Zn(2+). The L-glutamate site is built by Tyr168 and Arg186. A 'KMSKS' region motif is present at residues 224 to 228 (KLSKQ). ATP is bound at residue Lys227.

Belongs to the class-I aminoacyl-tRNA synthetase family. GluQ subfamily. Zn(2+) is required as a cofactor.

Functionally, catalyzes the tRNA-independent activation of glutamate in presence of ATP and the subsequent transfer of glutamate onto a tRNA(Asp). Glutamate is transferred on the 2-amino-5-(4,5-dihydroxy-2-cyclopenten-1-yl) moiety of the queuosine in the wobble position of the QUC anticodon. The sequence is that of Glutamyl-Q tRNA(Asp) synthetase from Idiomarina loihiensis (strain ATCC BAA-735 / DSM 15497 / L2-TR).